A 1386-amino-acid polypeptide reads, in one-letter code: DNA-directed RNA polymerase subunit beta'' (1386 aa).

4 residues coordinate Zn(2+): C224, C294, C301, and C304.

This sequence belongs to the RNA polymerase beta' chain family. RpoC2 subfamily. In plastids the minimal PEP RNA polymerase catalytic core is composed of four subunits: alpha, beta, beta', and beta''. When a (nuclear-encoded) sigma factor is associated with the core the holoenzyme is formed, which can initiate transcription. It depends on Zn(2+) as a cofactor.

It is found in the plastid. It localises to the chloroplast. The enzyme catalyses RNA(n) + a ribonucleoside 5'-triphosphate = RNA(n+1) + diphosphate. DNA-dependent RNA polymerase catalyzes the transcription of DNA into RNA using the four ribonucleoside triphosphates as substrates. The protein is DNA-directed RNA polymerase subunit beta'' of Acorus calamus (Sweet flag).